A 232-amino-acid polypeptide reads, in one-letter code: Single-stranded DNA-binding protein (232 aa).

2 stretches are compositionally biased toward acidic residues: residues 190-200 (GEDEWADEVED) and 216-232 (EWQE…DEDF). A disordered region spans residues 190–232 (GEDEWADEVEDGGYTASESRQSRDEQEWQEDEHEETPDDDEDF). The dimerization and interaction with the viral DNA polymerase and helicase stretch occupies residues 213-232 (DEQEWQEDEHEETPDDDEDF).

Belongs to the Teseptimavirus single-stranded DNA-binding protein family. Homodimer. Interacts (via C-terminus) with the viral DNA polymerase. Interacts with the viral helicase/primase. Part of the replicase complex that includes the DNA polymerase, the primase/helicase and the single-stranded DNA binding protein.

Single-stranded DNA-binding protein that participates in viral DNA replication, formation of concatemers, recombination and repair of double-stranded breaks. Coats the lagging-strand ssDNA as the replication fork advances and stimulates the activities of viral DNA polymerase and primase/helicase. Coordinates simultaneous synthesis of leading- and lagging-strands. Together with DNA primase/helicase, promotes pairing of two homologous DNA molecules containing complementary single-stranded regions and mediates homologous DNA strand exchange. Also promotes the formation of joint molecules. Disrupts loops, hairpins and other secondary structures present on ssDNA to reduce and eliminate pausing of viral DNA polymerase at specific sites during elongation. This chain is Single-stranded DNA-binding protein (2.5), found in Enterobacteria phage T3 (Bacteriophage T3).